We begin with the raw amino-acid sequence, 234 residues long: 2,3-bisphosphoglycerate-dependent phosphoglycerate mutase (234 aa).

Substrate is bound by residues 8–15 (RHGESVWN), 21–22 (TG), Arg-60, 87–90 (ERHY), Lys-98, 114–115 (RR), and 183–184 (GN). The active-site Tele-phosphohistidine intermediate is the His-9. Catalysis depends on Glu-87, which acts as the Proton donor/acceptor.

It belongs to the phosphoglycerate mutase family. BPG-dependent PGAM subfamily. As to quaternary structure, homodimer.

It catalyses the reaction (2R)-2-phosphoglycerate = (2R)-3-phosphoglycerate. Its pathway is carbohydrate degradation; glycolysis; pyruvate from D-glyceraldehyde 3-phosphate: step 3/5. Catalyzes the interconversion of 2-phosphoglycerate and 3-phosphoglycerate. The polypeptide is 2,3-bisphosphoglycerate-dependent phosphoglycerate mutase (Citrifermentans bemidjiense (strain ATCC BAA-1014 / DSM 16622 / JCM 12645 / Bem) (Geobacter bemidjiensis)).